A 554-amino-acid polypeptide reads, in one-letter code: Glucose-6-phosphate isomerase (554 aa).

The active-site Proton donor is the E359. Catalysis depends on residues H390 and K518.

The protein belongs to the GPI family.

The protein resides in the cytoplasm. It carries out the reaction alpha-D-glucose 6-phosphate = beta-D-fructose 6-phosphate. Its pathway is carbohydrate biosynthesis; gluconeogenesis. It functions in the pathway carbohydrate degradation; glycolysis; D-glyceraldehyde 3-phosphate and glycerone phosphate from D-glucose: step 2/4. Catalyzes the reversible isomerization of glucose-6-phosphate to fructose-6-phosphate. In Pseudomonas fluorescens (strain SBW25), this protein is Glucose-6-phosphate isomerase.